The sequence spans 760 residues: Catalase-peroxidase (760 aa).

An N-terminal signal peptide occupies residues 1-45; the sequence is MKGTPFRSPHLYQEGSSCMHRTIRSVAAVLTVVLSATIPMVPAWS. A cross-link (tryptophyl-tyrosyl-methioninium (Trp-Tyr) (with M-271)) is located at residues 124 to 245; it reads WHGAGTYRTY…LAATQMGLIY (122 aa). H125 serves as the catalytic Proton acceptor. Positions 245–271 form a cross-link, tryptophyl-tyrosyl-methioninium (Tyr-Met) (with W-124); it reads YVNPEGPNGVPDPVAAARDIREAFGGM. Heme b is bound at residue H286.

The protein belongs to the peroxidase family. Peroxidase/catalase subfamily. Homodimer or homotetramer. It depends on heme b as a cofactor. In terms of processing, formation of the three residue Trp-Tyr-Met cross-link is important for the catalase, but not the peroxidase activity of the enzyme.

The catalysed reaction is H2O2 + AH2 = A + 2 H2O. It catalyses the reaction 2 H2O2 = O2 + 2 H2O. Bifunctional enzyme with both catalase and broad-spectrum peroxidase activity. This is Catalase-peroxidase from Granulibacter bethesdensis (strain ATCC BAA-1260 / CGDNIH1).